Reading from the N-terminus, the 314-residue chain is Ribosomal protein L11 methyltransferase (314 aa).

Positions 163, 184, 206, and 248 each coordinate S-adenosyl-L-methionine.

The protein belongs to the methyltransferase superfamily. PrmA family.

It localises to the cytoplasm. It catalyses the reaction L-lysyl-[protein] + 3 S-adenosyl-L-methionine = N(6),N(6),N(6)-trimethyl-L-lysyl-[protein] + 3 S-adenosyl-L-homocysteine + 3 H(+). In terms of biological role, methylates ribosomal protein L11. The sequence is that of Ribosomal protein L11 methyltransferase from Lactobacillus delbrueckii subsp. bulgaricus (strain ATCC BAA-365 / Lb-18).